A 161-amino-acid chain; its full sequence is SsrA-binding protein (161 aa).

The protein belongs to the SmpB family.

It is found in the cytoplasm. Functionally, required for rescue of stalled ribosomes mediated by trans-translation. Binds to transfer-messenger RNA (tmRNA), required for stable association of tmRNA with ribosomes. tmRNA and SmpB together mimic tRNA shape, replacing the anticodon stem-loop with SmpB. tmRNA is encoded by the ssrA gene; the 2 termini fold to resemble tRNA(Ala) and it encodes a 'tag peptide', a short internal open reading frame. During trans-translation Ala-aminoacylated tmRNA acts like a tRNA, entering the A-site of stalled ribosomes, displacing the stalled mRNA. The ribosome then switches to translate the ORF on the tmRNA; the nascent peptide is terminated with the 'tag peptide' encoded by the tmRNA and targeted for degradation. The ribosome is freed to recommence translation, which seems to be the essential function of trans-translation. This Mycolicibacterium smegmatis (strain ATCC 700084 / mc(2)155) (Mycobacterium smegmatis) protein is SsrA-binding protein.